The primary structure comprises 510 residues: NAD(P)H-quinone oxidoreductase subunit 2, chloroplastic (510 aa).

The next 11 helical transmembrane spans lie at 24–44 (LLLFHGSFIFPECILIFGLIL), 59–79 (WFYFISSTSLVMSITALLFRW), 99–119 (IFQFLILLCSTLCIPLSVEYI), 124–144 (MAITEFLLFVLTATLGGMFLC), 149–169 (LITIFVAPECFSLCSYLLSGY), 183–203 (YLLMGGASSSILVHGFSWLYG), 295–315 (WHLLLEILAILSMILGNLIAI), 323–343 (MLAYSSIGQIGYVIIGIIVGD), 347–367 (GYASMITYMLFYISMNLGTFA), 395–415 (ALSSALCLLSLGGLPPLAGFF), and 418–438 (LHLFWCGWQAGLYFLVSIGLL).

Belongs to the complex I subunit 2 family. In terms of assembly, NDH is composed of at least 16 different subunits, 5 of which are encoded in the nucleus.

It localises to the plastid. The protein resides in the chloroplast thylakoid membrane. It carries out the reaction a plastoquinone + NADH + (n+1) H(+)(in) = a plastoquinol + NAD(+) + n H(+)(out). It catalyses the reaction a plastoquinone + NADPH + (n+1) H(+)(in) = a plastoquinol + NADP(+) + n H(+)(out). Functionally, NDH shuttles electrons from NAD(P)H:plastoquinone, via FMN and iron-sulfur (Fe-S) centers, to quinones in the photosynthetic chain and possibly in a chloroplast respiratory chain. The immediate electron acceptor for the enzyme in this species is believed to be plastoquinone. Couples the redox reaction to proton translocation, and thus conserves the redox energy in a proton gradient. The protein is NAD(P)H-quinone oxidoreductase subunit 2, chloroplastic of Maianthemum racemosum (False Solomon's-seal).